Reading from the N-terminus, the 271-residue chain is GATA transcription factor 19 (271 aa).

The segment at 1–23 (MAAEPPADGRDPPADDGAAGDGA) is disordered. Residues 33–68 (LSAASEQLTLVYQGEVYVFDPVPPQKVQAVLLVLGG) form the Tify domain. Residues 95–137 (RVASLMRFREKRKERCFDKKIRYSVRKEVAQKMKRRKGQFAGR) enclose the CCT domain. Residues 166 to 193 (CQNCGISSRLTPAMRRGPAGPRSLCNAC) form a GATA-type zinc finger. Residues 238 to 271 (NQTTMKTDTEMVPEQEQKADVLPPTKEEDSMATS) are disordered. The segment covering 252-271 (QEQKADVLPPTKEEDSMATS) has biased composition (basic and acidic residues).

Belongs to the type IV zinc-finger family. Class C subfamily.

It localises to the nucleus. Functionally, transcriptional activator that specifically binds 5'-GATA-3' or 5'-GAT-3' motifs within gene promoters. This is GATA transcription factor 19 from Oryza sativa subsp. japonica (Rice).